We begin with the raw amino-acid sequence, 153 residues long: Selenoprotein F (153 aa).

The N-terminal stretch at 1 to 19 is a signal peptide; that stretch reads MAGEVYLLWLLPLLQGLAS. Sec-84 is a non-standard amino acid (selenocysteine).

Belongs to the selenoprotein M/F family. Higher levels in polster, prechordal plate, axis, otic vesicle and somites. Lower levels in fin buds.

Its subcellular location is the endoplasmic reticulum lumen. Its function is as follows. May be involved in redox reactions associated with the formation of disulfide bonds. May contribute to the quality control of protein folding in the endoplasmic reticulum. This is Selenoprotein F from Danio rerio (Zebrafish).